A 116-amino-acid polypeptide reads, in one-letter code: Large ribosomal subunit protein bL17 (116 aa).

Belongs to the bacterial ribosomal protein bL17 family. As to quaternary structure, part of the 50S ribosomal subunit. Contacts protein L32.

This is Large ribosomal subunit protein bL17 from Chloroflexus aggregans (strain MD-66 / DSM 9485).